The chain runs to 159 residues: Transcription elongation factor GreA (159 aa).

Belongs to the GreA/GreB family.

Functionally, necessary for efficient RNA polymerase transcription elongation past template-encoded arresting sites. The arresting sites in DNA have the property of trapping a certain fraction of elongating RNA polymerases that pass through, resulting in locked ternary complexes. Cleavage of the nascent transcript by cleavage factors such as GreA or GreB allows the resumption of elongation from the new 3'terminus. GreA releases sequences of 2 to 3 nucleotides. The protein is Transcription elongation factor GreA of Psychromonas ingrahamii (strain DSM 17664 / CCUG 51855 / 37).